A 352-amino-acid chain; its full sequence is C5a anaphylatoxin chemotactic receptor 1 (352 aa).

Residues 1-11 (MDPISNDSSEI) show a composition bias toward polar residues. The disordered stretch occupies residues 1 to 20 (MDPISNDSSEITYDYSDGTP). The Extracellular portion of the chain corresponds to 1 to 38 (MDPISNDSSEITYDYSDGTPNPDMPADGVYIPKMEPGD). N-linked (GlcNAc...) asparagine glycosylation is present at Asn6. Sulfotyrosine occurs at positions 13 and 15. A helical membrane pass occupies residues 39-65 (IAALIIYLAVFLVGVTGNALVVWVTAF). At 66-70 (EAKRT) the chain is on the cytoplasmic side. A helical transmembrane segment spans residues 71–94 (VNAIWFLNLAVADLLSCLALPILF). Over 95–111 (TSIVKHNHWPFGDQACI) the chain is Extracellular. Residues Cys110 and Cys189 are joined by a disulfide bond. Residues 112–133 (VLPSLILLNMYSSILLLATISA) traverse the membrane as a helical segment. Over 134-154 (DRFLLVFKPIWCQKFRRPGLA) the chain is Cytoplasmic. A helical transmembrane segment spans residues 155-175 (WMACGVTWVLALLLTIPSFVF). Residues 176–202 (RRIHKDPYSDSILCNIDYSKGPFFIEK) lie on the Extracellular side of the membrane. A helical membrane pass occupies residues 203–228 (AIAILRLMVGFVLPLLTLNICYTFLL). Residues 229–244 (IRTWSRKATRSTKTLK) are Cytoplasmic-facing. A helical membrane pass occupies residues 245–267 (VVMAVVTCFFVFWLPYQVTGVIL). The Extracellular segment spans residues 268–284 (AWLPRSSSTFQSVERLN). A helical transmembrane segment spans residues 285-305 (SLCVSLAYINCCVNPIIYVMA). Residues 306–352 (GQGFHGRLRRSLPSIIRNVLSEDSLGRDSKSFTRSTMDTSTQKSQAV) are Cytoplasmic-facing. A phosphoserine mark is found at Ser316, Ser319, Ser326, Ser329, Ser334, Ser336, and Ser340. The interval 332–352 (RDSKSFTRSTMDTSTQKSQAV) is disordered. A compositionally biased stretch (polar residues) spans 337–352 (FTRSTMDTSTQKSQAV).

Belongs to the G-protein coupled receptor 1 family. Homodimer. May also form higher-order oligomers. Interacts (when phosphorylated) with ARRB1 and ARRB2; the interaction is associated with internalization of C5aR. Sulfation plays a critical role in the association of C5aR with C5a, but no significant role in the ability of the receptor to transduce a signal and mobilize calcium in response to a small peptide agonist. Post-translationally, phosphorylated on serine residues in response to C5a binding, resulting in internalization of the receptor and short-term desensitization to the ligand.

The protein localises to the cell membrane. Its subcellular location is the cytoplasmic vesicle. Its function is as follows. Receptor for the chemotactic and inflammatory peptide anaphylatoxin C5a. The ligand interacts with at least two sites on the receptor: a high-affinity site on the extracellular N-terminus, and a second site in the transmembrane region which activates downstream signaling events. Receptor activation stimulates chemotaxis, granule enzyme release, intracellular calcium release and superoxide anion production. This Rattus norvegicus (Rat) protein is C5a anaphylatoxin chemotactic receptor 1 (C5ar1).